A 366-amino-acid polypeptide reads, in one-letter code: Protein sigma-NS (366 aa).

The interval 1–11 (MASSLRAAISK) is important for ssRNA-binding and formation of complexes.

Belongs to the orthoreovirus sigma-NS protein family. As to quaternary structure, homooligomer; in presence of RNA. Interacts with protein mu-NS; this interaction allows the localization of sigma-NS to the viral factories. Interacts with host G3BP1 (via C-terminus); this interaction induces the relocalization of G3BP1 and other SG proteins to the viral factories periphery.

Its subcellular location is the host cytoplasm. Its function is as follows. Protein that binds to ssRNA and participates with protein mu-NS in forming the matrix of viral factories, which are large inclusions in the host cytoplasm where replication intermediates are assembled and viral RNA replication takes place. Plays a role in the inhibition of the integrated stress response (ISR) to escape from host cell translational shutoff. Participates in the disruption of stress granules (SG) through its association with host G3BP1 and mu-NS. The sequence is that of Protein sigma-NS (S3) from Mammalia (T1L).